A 317-amino-acid chain; its full sequence is Ribosomal protein L11 methyltransferase (317 aa).

The S-adenosyl-L-methionine site is built by Thr-158, Gly-179, Asp-201, and Asn-244.

Belongs to the methyltransferase superfamily. PrmA family.

The protein resides in the cytoplasm. It carries out the reaction L-lysyl-[protein] + 3 S-adenosyl-L-methionine = N(6),N(6),N(6)-trimethyl-L-lysyl-[protein] + 3 S-adenosyl-L-homocysteine + 3 H(+). Methylates ribosomal protein L11. In Lactococcus lactis subsp. cremoris (strain SK11), this protein is Ribosomal protein L11 methyltransferase.